Reading from the N-terminus, the 830-residue chain is ABC transporter G family member STR (830 aa).

Residues 1–551 (MAKFKRTDTN…RTTLNVIRTP (551 aa)) lie on the Cytoplasmic side of the membrane. Residues 46 to 297 (LEFNNLSYSV…LAGFARPVPD (252 aa)) form the ABC transporter domain. An ATP-binding site is contributed by 90–97 (GPSGAGKS). Disordered stretches follow at residues 333-356 (DQAA…PYAK), 368-422 (SHFS…SMQS), and 471-491 (SMSS…NKTP). Polar residues predominate over residues 368–378 (SHFSTGNMNSQ). Residues 395–405 (DYEDDDDEDEF) show a composition bias toward acidic residues. Positions 471-483 (SMSSSQFSMTQQT) are enriched in low complexity. A helical membrane pass occupies residues 552–572 (ELFLSREIVLTVMGLVLSSFF). Residues 573–588 (KKLSHFDFKTINHLLN) lie on the Extracellular side of the membrane. The helical transmembrane segment at 589 to 609 (FYIFTICLVFFSSNDAVPTFI) threads the bilayer. At 610 to 630 (QERFIFIRETSHNAYRASSYV) the chain is on the cytoplasmic side. Residues 631–651 (ISSLIVYLPFFAIQGFTFAGI) form a helical membrane-spanning segment. Residues 652–661 (TQYILHLNSS) are Extracellular-facing. The N-linked (GlcNAc...) asparagine glycan is linked to Asn659. The helical transmembrane segment at 662–682 (ILSFWLILYSSLVTSNAYVML) threads the bilayer. Over 683–690 (VSALVPSY) the chain is Cytoplasmic. A helical transmembrane segment spans residues 691–711 (ITGYAVVIATTALFFLTCGFF). At 712–798 (LKRTQIPLVW…LFSMDIREEN (87 aa)) the chain is on the extracellular side. Asn771 and Asn780 each carry an N-linked (GlcNAc...) asparagine glycan. The chain crosses the membrane as a helical span at residues 799-819 (IWLDIVILLAWGVLYRLFFYV). At 820–830 (VLRFYSKNERK) the chain is on the cytoplasmic side.

It belongs to the ABC transporter superfamily. ABCG family. Stunted arbuscule (STR) subfamily. As to quaternary structure, heterodimerizes with STR2; the resulting transporter is located in the peri-arbuscular membrane.

Its subcellular location is the cell membrane. Functionally, together with STR2, required for arbuscule development in arbuscular mycorrhizal (AM) symbiosis. This chain is ABC transporter G family member STR, found in Petunia hybrida (Petunia).